The following is a 156-amino-acid chain: MKLQLIAVGTKMPKWVEEGYKEYSRRFPKDMPLELIEIPAGKRGKNADIARILQKEGEAMLATVAKGNRIVTLDIPGKRWDTGQLAQQLDSWKLDGRDVSILIGGPEGLSPACKAAAEQSWSLSPLTLPHPLVRVVMAESLYRAWSVTANHPYHRE.

S-adenosyl-L-methionine-binding positions include Leu73, Gly104, and 123 to 128; that span reads LSPLTL.

The protein belongs to the RNA methyltransferase RlmH family. Homodimer.

It is found in the cytoplasm. It catalyses the reaction pseudouridine(1915) in 23S rRNA + S-adenosyl-L-methionine = N(3)-methylpseudouridine(1915) in 23S rRNA + S-adenosyl-L-homocysteine + H(+). In terms of biological role, specifically methylates the pseudouridine at position 1915 (m3Psi1915) in 23S rRNA. This Photobacterium profundum (strain SS9) protein is Ribosomal RNA large subunit methyltransferase H.